The following is a 58-amino-acid chain: uncharacterized protein (58 aa).

This is an uncharacterized protein from Archaeoglobus fulgidus (strain ATCC 49558 / DSM 4304 / JCM 9628 / NBRC 100126 / VC-16).